The chain runs to 104 residues: Large ribosomal subunit protein uL24 (104 aa).

This sequence belongs to the universal ribosomal protein uL24 family. As to quaternary structure, part of the 50S ribosomal subunit.

One of two assembly initiator proteins, it binds directly to the 5'-end of the 23S rRNA, where it nucleates assembly of the 50S subunit. Its function is as follows. One of the proteins that surrounds the polypeptide exit tunnel on the outside of the subunit. This chain is Large ribosomal subunit protein uL24, found in Pseudomonas fluorescens (strain Pf0-1).